The sequence spans 493 residues: Poly(ribitol-phosphate) alpha-N-acetylglucosaminyltransferase (493 aa).

Residues G17, K59, H249, R326, K331, T383, and 403-411 (EGQGLSMIE) contribute to the UDP-N-acetyl-alpha-D-glucosamine site.

It belongs to the glycosyltransferase group 1 family. As to quaternary structure, homotrimer.

The protein resides in the cytoplasm. The enzyme catalyses 4-O-[(D-ribitylphospho)(n)-di{(2R)-glycerylphospho}]-N-acetyl-beta-D-mannosaminyl-(1-&gt;4)-N-acetyl-alpha-D-glucosaminyl di-trans,octa-cis-undecaprenyl diphosphate + n UDP-N-acetyl-alpha-D-glucosamine = 4-O-([2-N-acetyl-alpha-D-glucosaminyl-1-D-ribitylphospho](n)-di{[2R]-1-glycerylphospho})-N-acetyl-beta-D-mannosaminyl-(1-&gt;4)-N-acetyl-alpha-D-glucosaminyl di-trans,octa-cis-undecaprenyl diphosphate + n UDP + n H(+). Its pathway is cell wall biogenesis; poly(ribitol phosphate) teichoic acid biosynthesis. Its function is as follows. Attaches N-acetyl-alpha-D-glucosamine residues to poly(RboP)-wall teichoic acids (WTAs). The protein is Poly(ribitol-phosphate) alpha-N-acetylglucosaminyltransferase of Staphylococcus aureus (strain COL).